The chain runs to 359 residues: MSGLTVSIRGRNGAFAIEAGFAAEGGVTALFGHSGAGKTTLLKMIAGTLRPENGRIAVGDFTLFDAQKGINLPPEKRCIGYVFQDARLFAYMSVKRNLTYARWAGHRQATRSFDEVVALLGIGHLLDRRPSTLSGGERQRVAIGRALLSDPALLLLDEPLSSLDHARRQEILPFIERLRDESHVPIVYVSHEIDEVARLADQIVLLSAGRVTASGAAADIFPLIDAESEGGGVLLEGIVSAYDERYKLAEIDLGGASFQLSDAGLKQTMHVRLRVRARDVSIARKIPEAISIRNLLPVTVTGIERGEGPNAHVFLDFRGRRLGARLTRRSVDDLGLSVGDQVVALVKAVSVDRAAIREK.

One can recognise an ABC transporter domain in the interval 1 to 233; that stretch reads MSGLTVSIRG…IDAESEGGGV (233 aa). 32 to 39 contributes to the ATP binding site; it reads GHSGAGKT. The Mop domain maps to 289 to 355; the sequence is AISIRNLLPV…VKAVSVDRAA (67 aa).

It belongs to the ABC transporter superfamily. Molybdate importer (TC 3.A.1.8) family. As to quaternary structure, the complex is composed of two ATP-binding proteins (ModC), two transmembrane proteins (ModB) and a solute-binding protein (ModA).

Its subcellular location is the cell inner membrane. The enzyme catalyses molybdate(out) + ATP + H2O = molybdate(in) + ADP + phosphate + H(+). Part of the ABC transporter complex ModABC involved in molybdenum import. Responsible for energy coupling to the transport system. The protein is Molybdenum import ATP-binding protein ModC of Brucella suis biovar 1 (strain 1330).